Consider the following 436-residue polypeptide: Histidinol dehydrogenase (436 aa).

Y136, Q198, and N221 together coordinate NAD(+). The substrate site is built by S244, Q266, and H269. Residues Q266 and H269 each contribute to the Zn(2+) site. Active-site proton acceptor residues include E334 and H335. Substrate contacts are provided by H335, D368, E422, and H427. A Zn(2+)-binding site is contributed by D368. H427 serves as a coordination point for Zn(2+).

The protein belongs to the histidinol dehydrogenase family. Zn(2+) is required as a cofactor.

It carries out the reaction L-histidinol + 2 NAD(+) + H2O = L-histidine + 2 NADH + 3 H(+). It participates in amino-acid biosynthesis; L-histidine biosynthesis; L-histidine from 5-phospho-alpha-D-ribose 1-diphosphate: step 9/9. In terms of biological role, catalyzes the sequential NAD-dependent oxidations of L-histidinol to L-histidinaldehyde and then to L-histidine. The sequence is that of Histidinol dehydrogenase from Dehalococcoides mccartyi (strain ATCC BAA-2266 / KCTC 15142 / 195) (Dehalococcoides ethenogenes (strain 195)).